The sequence spans 444 residues: Histidinol dehydrogenase (444 aa).

3 residues coordinate NAD(+): Tyr135, Gln199, and Asn227. 3 residues coordinate substrate: Thr250, Gln272, and His275. Zn(2+) is bound by residues Gln272 and His275. Catalysis depends on proton acceptor residues Glu341 and His342. Positions 342, 375, 429, and 434 each coordinate substrate. Asp375 serves as a coordination point for Zn(2+). Residue His434 coordinates Zn(2+).

This sequence belongs to the histidinol dehydrogenase family. Zn(2+) is required as a cofactor.

It catalyses the reaction L-histidinol + 2 NAD(+) + H2O = L-histidine + 2 NADH + 3 H(+). It functions in the pathway amino-acid biosynthesis; L-histidine biosynthesis; L-histidine from 5-phospho-alpha-D-ribose 1-diphosphate: step 9/9. Functionally, catalyzes the sequential NAD-dependent oxidations of L-histidinol to L-histidinaldehyde and then to L-histidine. The polypeptide is Histidinol dehydrogenase (hisD) (Mycobacterium bovis (strain ATCC BAA-935 / AF2122/97)).